A 121-amino-acid polypeptide reads, in one-letter code: Pilin (121 aa).

Residues 1-51 (MNAVLSVQGASAPVKKKSFFSKFTRLNMLRLARAVIPAAVLMMFFPQLAMA) constitute a propeptide, leader peptide; cleaved by LepB. Residues 1 to 75 (MNAVLSVQGA…TVKATFGKDS (75 aa)) are Periplasmic-facing. A52 bears the N-acetylalanine mark. The helical transmembrane segment at 76–96 (SVVKWVVLAEVLVGAVMYMMT) threads the bilayer. The Cytoplasmic portion of the chain corresponds to 97 to 100 (KNVK). A helical transmembrane segment spans residues 101–121 (FLAGFAIISVFIAVGMAVVGL).

Belongs to the TraA family. As to quaternary structure, monomer. Interacts with itself to form filaments; also interacts with TraQ.

It localises to the cell inner membrane. It is found in the secreted. Propilin is the precursor of the pilus subunit, pilin, that forms conjugative pili, the filamentous surface appendages required for cell-to-cell contact during the earlier stages of bacterial conjugation, and that retract after contact is established. Mature pilin is assembled with the help of TraQ and TraX. Functions as a receptor for CdiA-CT from E.cloacae and E.coli, although it is not clear if this is physiologically relevant. This chain is Pilin (traA), found in Escherichia coli (strain K12).